Reading from the N-terminus, the 342-residue chain is Tetraacyldisaccharide 4'-kinase (342 aa).

ATP is bound at residue 68-75; that stretch reads TVGGTGKT.

It belongs to the LpxK family.

The enzyme catalyses a lipid A disaccharide + ATP = a lipid IVA + ADP + H(+). It functions in the pathway glycolipid biosynthesis; lipid IV(A) biosynthesis; lipid IV(A) from (3R)-3-hydroxytetradecanoyl-[acyl-carrier-protein] and UDP-N-acetyl-alpha-D-glucosamine: step 6/6. Transfers the gamma-phosphate of ATP to the 4'-position of a tetraacyldisaccharide 1-phosphate intermediate (termed DS-1-P) to form tetraacyldisaccharide 1,4'-bis-phosphate (lipid IVA). The chain is Tetraacyldisaccharide 4'-kinase from Burkholderia cenocepacia (strain HI2424).